Reading from the N-terminus, the 166-residue chain is Mitochondrial fission process protein 1 (166 aa).

2 helical membrane-spanning segments follow: residues 34-54 and 78-98; these read SLVP…YVLA and ALAV…IPGF. An N6-succinyllysine modification is found at lysine 123. Residues 129–149 traverse the membrane as a helical segment; sequence LGLLAIPVIIHPIDRSVDFLL.

This sequence belongs to the MTFP1 family.

The protein localises to the mitochondrion inner membrane. Involved in the mitochondrial division probably by regulating membrane fission. Loss-of-function leads to apoptosis. This is Mitochondrial fission process protein 1 (Mtfp1) from Mus musculus (Mouse).